A 299-amino-acid chain; its full sequence is Protease HtpX homolog (299 aa).

2 consecutive transmembrane segments (helical) span residues 14 to 34 (ILVM…VGYL) and 39 to 59 (ATGG…IMVG). His144 is a Zn(2+) binding site. Glu145 is an active-site residue. Position 148 (His148) interacts with Zn(2+). A run of 2 helical transmembrane segments spans residues 159–179 (IALA…NFMW) and 196–216 (VFAI…ATMV). Glu225 contributes to the Zn(2+) binding site.

It belongs to the peptidase M48B family. Zn(2+) is required as a cofactor.

Its subcellular location is the cell membrane. This chain is Protease HtpX homolog, found in Limosilactobacillus fermentum (strain NBRC 3956 / LMG 18251) (Lactobacillus fermentum).